Reading from the N-terminus, the 928-residue chain is Interphotoreceptor matrix proteoglycan 1 (928 aa).

Residues 1 to 20 (MHLKTGLIFLAICLALQVQG) form the signal peptide. The tract at residues 26–50 (SKTNHGEAKQLADASGSDKTERTTK) is disordered. A compositionally biased stretch (basic and acidic residues) spans 29–49 (NHGEAKQLADASGSDKTERTT). A glycan (N-linked (GlcNAc...) asparagine) is linked at N143. A compositionally biased stretch (basic and acidic residues) spans 164-182 (QERKDEISTDKTGGKKLED). The interval 164–191 (QERKDEISTDKTGGKKLEDIPSVSTGPP) is disordered. N203 and N212 each carry an N-linked (GlcNAc...) asparagine glycan. One can recognise an SEA 1 domain in the interval 231–356 (AEQMVEFSVT…TKLTVTDLQQ (126 aa)). 2 disordered regions span residues 441–481 (LSRE…TEDI) and 494–522 (ALVS…NDLI). Residues 466–477 (PSREPPHDRSPD) show a composition bias toward basic and acidic residues. Positions 735–848 (KELVVFFSLR…YSLDIEPADQ (114 aa)) constitute an SEA 2 domain. Residues N756 and N780 are each glycosylated (N-linked (GlcNAc...) asparagine). Residues 785-793 (KQLEILNFR) carry the Heparin- and hyaluronan-binding motif. N794 and N812 each carry an N-linked (GlcNAc...) asparagine glycan.

Post-translationally, highly glycosylated (N- and O-linked carbohydrates and sialic acid). Abundantly expressed in the retina (at protein level). Localizes to the photoreceptor layer of the interphotoreceptor matrix of the retina (at protein level).

Its subcellular location is the cell projection. The protein localises to the cilium. It localises to the photoreceptor outer segment. The protein resides in the secreted. It is found in the extracellular space. Its subcellular location is the extracellular matrix. The protein localises to the interphotoreceptor matrix. It localises to the photoreceptor inner segment. Chondroitin sulfate-, heparin- and hyaluronan-binding protein. May serve to form a basic macromolecular scaffold comprising the insoluble interphotoreceptor matrix. This is Interphotoreceptor matrix proteoglycan 1 from Gallus gallus (Chicken).